Reading from the N-terminus, the 133-residue chain is Nickel-responsive regulator (133 aa).

Ni(2+)-binding residues include His76, His87, His89, and Cys95.

Belongs to the transcriptional regulatory CopG/NikR family. Homotetramer. The cofactor is Ni(2+).

Transcriptional repressor of the nikABCDE operon. Is active in the presence of excessive concentrations of intracellular nickel. This chain is Nickel-responsive regulator, found in Escherichia coli (strain SE11).